We begin with the raw amino-acid sequence, 496 residues long: MKKYILSLDQGTTSSRAILFNKEGKIVHSAQKEFTQHFPKPGWVEHNAQEIWGSILAVIATCLSEADVKPEQIAGIGITNQRETAVVWDKTTGKPIYNAIVWQSRQTVEICDELKEKGYSEMVREKTGLLIDAYFSGTKVKWILDNVEGAREKAENGELLFGTIDTWLVWKLSGGKAHITDYSNASRTLMFNIHDLQWDDELLDMLTVPKSMLPEVRQSSEIYGETIDYHFFGQNVPIAGVAGDQQAALFGQACFGEGMAKNTYGTGCFMLMNTGEKAVASEHGLLTTIAWGLDGKVNYALEGSIFVAGSAIQWLRDGLRMFKDASESEVYASRVESTEGVYIVPAFVGLGTPYWDSEVRGAMFGVTRGTTKEHFIRATLESLAYQTKDVLCAMEADSGIELNTLRVDGGAVKNNFLMKFQSDILDVPVERPVINETTALGAAYLAGLAVGYWKNQDEIKAQWHMDKRFEPTMEAETSEELYAGWKKAIEATKAFK.

ADP is bound at residue threonine 12. 3 residues coordinate ATP: threonine 12, threonine 13, and serine 14. Sn-glycerol 3-phosphate is bound at residue threonine 12. Arginine 16 is a binding site for ADP. Arginine 82, glutamate 83, and tyrosine 134 together coordinate sn-glycerol 3-phosphate. Glycerol is bound by residues arginine 82, glutamate 83, and tyrosine 134. Residue histidine 230 is modified to Phosphohistidine; by HPr. Aspartate 244 contacts sn-glycerol 3-phosphate. 2 residues coordinate glycerol: aspartate 244 and glutamine 245. Residues threonine 266 and glycine 309 each coordinate ADP. ATP-binding residues include threonine 266, glycine 309, glutamine 313, and glycine 410. Positions 410 and 414 each coordinate ADP.

The protein belongs to the FGGY kinase family. Homotetramer and homodimer (in equilibrium). The phosphoenolpyruvate-dependent sugar phosphotransferase system (PTS), including enzyme I, and histidine-containing protein (HPr) are required for the phosphorylation, which leads to the activation of the enzyme.

It carries out the reaction glycerol + ATP = sn-glycerol 3-phosphate + ADP + H(+). The protein operates within polyol metabolism; glycerol degradation via glycerol kinase pathway; sn-glycerol 3-phosphate from glycerol: step 1/1. With respect to regulation, activated by phosphorylation and inhibited by fructose 1,6-bisphosphate (FBP). Functionally, key enzyme in the regulation of glycerol uptake and metabolism. Catalyzes the phosphorylation of glycerol to yield sn-glycerol 3-phosphate. The chain is Glycerol kinase from Bacillus mycoides (strain KBAB4) (Bacillus weihenstephanensis).